The primary structure comprises 721 residues: Protein mu-NS (721 aa).

The interaction with sigma-NS stretch occupies residues Met1–Pro13. Positions Met1–Ser38 are RNA-binding. Residues Val14–Asp40 are interaction with mu-2. Positions Ser471–Leu721 are involved in the formation of factory-like inclusions. Coiled coils occupy residues Pro522–Gln559 and Leu628–Gln684.

It belongs to the orthoreovirus mu-NS protein family. Interacts with mu-2. Interacts with sigma-NS; in viral factories. Interacts with the inner capsid proteins lambda-1 and sigma-2, and outer capsid protein lambda-2; in viral factories. Post-translationally, the N-terminus is blocked.

The protein localises to the host cytoplasm. Non-structural protein implicated with protein sigma-NS in forming the matrix of viral factories, which are large inclusions in the host cytoplasm where replication intermediates are assembled and viral RNA replication takes place. Together with mu-2, recruits the other core proteins to these factories. Binds RNA and recruits viral mRNAs to sites of viral replication. In Reovirus type 3 (strain Dearing) (T3D), this protein is Protein mu-NS (M3).